Consider the following 130-residue polypeptide: Small ribosomal subunit protein uS8 (130 aa).

This sequence belongs to the universal ribosomal protein uS8 family. As to quaternary structure, part of the 30S ribosomal subunit. Contacts proteins S5 and S12.

One of the primary rRNA binding proteins, it binds directly to 16S rRNA central domain where it helps coordinate assembly of the platform of the 30S subunit. This is Small ribosomal subunit protein uS8 from Nitrosococcus oceani (strain ATCC 19707 / BCRC 17464 / JCM 30415 / NCIMB 11848 / C-107).